The following is a 372-amino-acid chain: Alpha-L-fucosidase 3 (372 aa).

A signal peptide spans 1-23 (MNPILSSLFALSLLSSLSPSTHA). Residue serine 37 is the Nucleophile of the active site. N-linked (GlcNAc...) asparagine glycans are attached at residues asparagine 96, asparagine 114, asparagine 139, and asparagine 182. Active-site residues include aspartate 345 and histidine 348.

Belongs to the 'GDSL' lipolytic enzyme family. In terms of tissue distribution, high expression in younger leaves and in the apical region of the inflorescence stem.

It is found in the secreted. The protein localises to the extracellular space. Its subcellular location is the apoplast. The enzyme catalyses an alpha-L-fucoside + H2O = L-fucose + an alcohol. Functionally, hydrolyzes alpha-1,2-linked fucose. Also active on fucosylated xyloglucan oligosaccharides. The chain is Alpha-L-fucosidase 3 (FXG1) from Arabidopsis thaliana (Mouse-ear cress).